The sequence spans 404 residues: NADH-quinone oxidoreductase subunit D 1 (404 aa).

The protein belongs to the complex I 49 kDa subunit family. As to quaternary structure, NDH-1 is composed of 14 different subunits. Subunits NuoB, C, D, E, F, and G constitute the peripheral sector of the complex.

The protein resides in the cell inner membrane. The catalysed reaction is a quinone + NADH + 5 H(+)(in) = a quinol + NAD(+) + 4 H(+)(out). Functionally, NDH-1 shuttles electrons from NADH, via FMN and iron-sulfur (Fe-S) centers, to quinones in the respiratory chain. The immediate electron acceptor for the enzyme in this species is believed to be ubiquinone. Couples the redox reaction to proton translocation (for every two electrons transferred, four hydrogen ions are translocated across the cytoplasmic membrane), and thus conserves the redox energy in a proton gradient. This is NADH-quinone oxidoreductase subunit D 1 from Sorangium cellulosum (strain So ce56) (Polyangium cellulosum (strain So ce56)).